The chain runs to 91 residues: Large ribosomal subunit protein eL34 (91 aa).

The tract at residues 48 to 69 (RGRPVEMRKLPKTKKRPERPMP) is disordered.

It belongs to the eukaryotic ribosomal protein eL34 family.

This chain is Large ribosomal subunit protein eL34 (rpl34e), found in Pyrococcus horikoshii (strain ATCC 700860 / DSM 12428 / JCM 9974 / NBRC 100139 / OT-3).